A 552-amino-acid chain; its full sequence is Cation/acetate symporter ActP (552 aa).

The next 14 membrane-spanning stretches (helical) occupy residues 6-26, 35-55, 78-98, 103-123, 151-171, 185-205, 208-228, 264-284, 305-325, 357-377, 407-427, 431-451, 467-487, and 496-516; these read LLAV…AIAG, MEAI…TYWA, GLAM…SALV, FDGL…LFLI, LSAC…MVGA, VAVV…GMLA, WVQI…AIMV, ISAL…PHIL, GLMG…ILLV, LFLG…VAGL, VSKI…ILFE, IAFM…PIIL, GGWL…TIWV, and IFPY…GTWL.

It belongs to the sodium:solute symporter (SSF) (TC 2.A.21) family.

The protein localises to the cell inner membrane. Its function is as follows. Transports acetate. This is Cation/acetate symporter ActP from Erwinia tasmaniensis (strain DSM 17950 / CFBP 7177 / CIP 109463 / NCPPB 4357 / Et1/99).